The sequence spans 559 residues: MKRILGLIAYASVPTVINAVQISVDETAPSNPVFDAYVSYSIEFSSFPDYAGNNSRPNTFSENLLDNLGKITGTKPYIRVGGNTQDYALYNASLPYSLNGTIDPKRSSDYPTTIFIGPSFFESYNSFKNTRFIHGFNLGLGGNRTSGWQTLLDTVPLACKALGGGKLFAWTYGNEPDLFSTSAQGPVRPPSWNEAEYVDQWLNGTRKIHELLERNCPDLAKNGTYGYIAPSFAGVGNKLKAPKAWGEGLNEDKNIKLFATHNYISGATSPGVTLQGTLMNHSMTKASVDAHIVEYNQVKAIDAAAPPLIFGETNSLYNQGRPGLSNTFGAALWGVDFNLYSASVGFKRVHMHMGTNYRYASWQPIATNKATIGTKAPYYGNIAVASFLAPPPSSPYDSPATSLATVKHLPISSTPFLSAYAAYHSSNLTRLILINLQSYNTTASGEGLAPLPPSSLTPRPSVTFNFTLPAAYLLTDGGKEKQVVVKRLMANGSDAITGITWDGWSYNWELDGGRPVRLPNVTRTSESERAWVGEGTSDGGKAGLGVVVEAGSAALVEFV.

The signal sequence occupies residues 1-19 (MKRILGLIAYASVPTVINA). Residues N53, N91, N99, and N143 are each glycosylated (N-linked (GlcNAc...) asparagine). The active-site Proton donor is E194. N203, N222, and N280 each carry an N-linked (GlcNAc...) asparagine glycan. Catalysis depends on E312, which acts as the Nucleophile. N-linked (GlcNAc...) asparagine glycosylation is found at N427, N440, N465, N491, and N520.

This sequence belongs to the glycosyl hydrolase 79 family.

The protein localises to the secreted. The enzyme catalyses a beta-D-glucuronoside + H2O = D-glucuronate + an alcohol. In terms of biological role, beta-glucuronidase that hydrolyzes beta-glucuronosyl and 4-O-methyl-beta-glucuronosyl residues of arabinogalactan-protein. Hydrolyzed heparan sulfate only very weakly. Has no activity on xylan from birchwood. Able to catalyze the transglycosylation of glucuronic acid (GlcA) residues from p-nitrophenyl-beta-glucuronic acid (PNP beta-GlcA) to various monosaccharide acceptors such as glucose, galactose and xylose. The polypeptide is Beta-glucuronidase (Neurospora crassa (strain ATCC 24698 / 74-OR23-1A / CBS 708.71 / DSM 1257 / FGSC 987)).